The following is a 448-amino-acid chain: Tubulin alpha-2 chain (448 aa).

Residues glutamine 11, glutamate 69, serine 138, glycine 142, threonine 143, threonine 177, asparagine 204, and asparagine 226 each contribute to the GTP site. Glutamate 69 is a Mg(2+) binding site. Glutamate 252 is a catalytic residue. Residues 428–448 (KDYEEVGADSNEGGEEEGEEY) are disordered. Residues 429–448 (DYEEVGADSNEGGEEEGEEY) are compositionally biased toward acidic residues.

The protein belongs to the tubulin family. As to quaternary structure, dimer of alpha and beta chains. A typical microtubule is a hollow water-filled tube with an outer diameter of 25 nm and an inner diameter of 15 nM. Alpha-beta heterodimers associate head-to-tail to form protofilaments running lengthwise along the microtubule wall with the beta-tubulin subunit facing the microtubule plus end conferring a structural polarity. Microtubules usually have 13 protofilaments but different protofilament numbers can be found in some organisms and specialized cells. Mg(2+) is required as a cofactor. Post-translationally, undergoes a tyrosination/detyrosination cycle, the cyclic removal and re-addition of a C-terminal tyrosine residue. Expressed in intestine, pharyngeal muscle cells, and a subset of neurons.

The protein resides in the cytoplasm. The protein localises to the cytoskeleton. The enzyme catalyses GTP + H2O = GDP + phosphate + H(+). Functionally, tubulin is the major constituent of microtubules, a cylinder consisting of laterally associated linear protofilaments composed of alpha- and beta-tubulin heterodimers. Microtubules grow by the addition of GTP-tubulin dimers to the microtubule end, where a stabilizing cap forms. Below the cap, tubulin dimers are in GDP-bound state, owing to GTPase activity of alpha-tubulin. Required for the normal dynamic behavior of the non-centrosomal microtubules in the epidermal syncytium. Involved in the redistribution of microtubule end-binding protein EB1/ebp-2 caused by wounding. Required to modulate expression in the epidermis of antimicrobial peptides, such as nlp-29, after wounding, or fungal infection. This chain is Tubulin alpha-2 chain (tba-2), found in Caenorhabditis elegans.